The following is a 1252-amino-acid chain: ABC transporter B family member 19 (1252 aa).

Residue Asn5 is glycosylated (N-linked (GlcNAc...) asparagine). In terms of domain architecture, ABC transmembrane type-1 1 spans 41–330 (MFVGSLGAIV…SFSNLGAFSK (290 aa)). A run of 2 helical transmembrane segments spans residues 42–62 (FVGS…FLLF) and 88–108 (LYFV…IACW). ATP is bound at residue Asp136. Transmembrane regions (helical) follow at residues 163–183 (VGNF…GFVS), 187–207 (LALL…LYAY), 274–294 (CTYG…GVFI), and 308–328 (IFSA…LGAF). Tyr276 and Trp283 together coordinate brassinolide. An ABC transporter 1 domain is found at 365–601 (IEFKDVTFSY…SGAYASLIRF (237 aa)). Tyr374, Ser376, Gly405, Lys406, Ser407, Thr408, and Glu529 together coordinate ATP. Asn641 is a glycosylation site (N-linked (GlcNAc...) asparagine). Residues 687–975 (SIMGAVGSIL…TVSLAPEIIR (289 aa)) enclose the ABC transmembrane type-1 2 domain. 2 helical membrane-spanning segments follow: residues 688-708 (IMGA…AIVM) and 732-752 (FIYI…HYFF). Asn758 is a glycosylation site (N-linked (GlcNAc...) asparagine). Position 780 (Asp780) interacts with ATP. N-linked (GlcNAc...) asparagine glycosylation is found at Asn785 and Asn814. Helical transmembrane passes span 822-842 (FIVA…TFPL), 914-934 (GFLF…ILWY), and 949-969 (VIKV…TVSL). The segment at 965–1252 (ETVSLAPEII…RLLQLQTHRI (288 aa)) is interaction with FKBP42/TWD1. Positions 1010-1246 (IEFRHVDFAY…PEGAYSRLLQ (237 aa)) constitute an ABC transporter 2 domain. Residues Tyr1019, Ser1021, Arg1022, Lys1051, Ser1052, and Ser1053 each contribute to the ATP site.

It belongs to the ABC transporter superfamily. ABCB family. Multidrug resistance exporter (TC 3.A.1.201) subfamily. Interacts with 1-naphthylphthalamic acid (NPA), and FKBP42/TWD1. Post-translationally, phosphorylated by PHOT1 in phototropic seedlings, to modulates auxin export and distribution and regulates leaf and petiole curling. In terms of tissue distribution, ubiquitous, mostly in shoot meristems. Present in the majority of stem cells, predominantly in a non-polar manner. Accumulates in seedlings roots and hypocotyls, and in roots apices and inflorescences.

It localises to the cell membrane. It carries out the reaction (indol-3-yl)acetate(in) + ATP + H2O = (indol-3-yl)acetate(out) + ADP + phosphate + H(+). It catalyses the reaction brassinolide(in) + ATP + H2O = brassinolide(out) + ADP + phosphate + H(+). The enzyme catalyses 24-epi-brassinolide(in) + ATP + H2O = 24-epi-brassinolide(out) + ADP + phosphate + H(+). The catalysed reaction is 24-epi-castasterone(in) + ATP + H2O = 24-epi-castasterone(out) + ADP + phosphate + H(+). It carries out the reaction castasterone(in) + ATP + H2O = castasterone(out) + ADP + phosphate + H(+). With respect to regulation, transport capacity is stimulated by the chaperone protein FKBP42/TWD1. ATPase activity is specifically activated by bioactive brassinosteroids in a dose-dependent manner, including brassinolide (BL), 24-epiBL and 24-epicastasterone (24-epiCS). Inhibited by vanadate. Its function is as follows. Brassinosteroid exporter that, in conjunction with ABCB1, supports the accumulation of exogenous brassinosteroids (BR) in the apoplast, thus promoting BR signaling initiation involving the specific receptor BRI1 and required for plant growth and stress responses. Mediates the transport of castasterone (CSA) and brassinolide (BL) across the plasma membrane. Auxin efflux transporter that acts as a negative regulator of light signaling to promote hypocotyl elongation by mediating leaf tip to petiole auxin flux. Required for the regulation of leaf position and morphology during PHOT1-mediated blue light responses involving auxin distribution, especially in low light fluence. Together with ABCB1 and in a FKBP42/TWD1-dependent manner, supports seed development by promoting stamen elongation and, to a lesser extent, anther dehiscence and pollen maturation, probably as auxin transporters. Contributes to the connective auxin transport (CAT) that ensures communication across the shoot system, including auxin loading at axillary bud apices to influence strigolactone-mediated bud outgrowth responses and shoot branching control. Mediates the accumulation of chlorophyll and anthocyanin, as well as the expression of genes in response to light. Participates in auxin efflux and thus regulates the polar auxin basipetal transport (from auxin-producing leaves to auxin-sensitive tissues, and from root tips to root elongating zone). Involved in diverse auxin-mediated responses including gravitropism, phototropism and lateral root formation. Required for the regulation of organ bending, such as gravitropic root bending. This Arabidopsis thaliana (Mouse-ear cress) protein is ABC transporter B family member 19.